Reading from the N-terminus, the 929-residue chain is Band 4.1-like protein 3 (929 aa).

Position 1 is an N-acetylmethionine (Met1). The tract at residues 1–72 (MTTESGSDSE…STPVKREIGD (72 aa)) is disordered. Residue Thr2 is modified to N-acetylthreonine; in Band 4.1-like protein 3, N-terminally processed. The span at 20-33 (QEAAGPQGQAGAQP) shows a compositional bias: low complexity. A Phosphoserine modification is found at Ser96. The FERM domain occupies 118–399 (MQCKVTLLDG…EHHTFFRLLL (282 aa)). Positions 402 to 528 (APPKKFLTLG…PVTALRHEGK (127 aa)) are hydrophilic. Ser428, Ser451, and Ser486 each carry phosphoserine. Residues 490 to 554 (LITTVTPEKK…TESDQEEDAE (65 aa)) are disordered. At Thr495 the chain carries Phosphothreonine. The segment covering 496–516 (PEKKAEEERVEEEDRRKKAEE) has biased composition (basic and acidic residues). Thr518 bears the Phosphothreonine mark. Residues 523–536 (LRHEGKTDSERTDT) are compositionally biased toward basic and acidic residues. Phosphoserine is present on residues His525 and Ser543. Phosphothreonine is present on Thr545. Position 547 is a phosphoserine (Ser547). Positions 559–602 (DLDKTQDELMKHQTNISELKRTFLETSTETALTNEWEKRLSTSP) are spectrin--actin-binding. Disordered regions lie at residues 608-630 (RQEDAPMIEPLVPEETKQSSGEK), 665-689 (LETKTEPVEAEVESTPHPQPLSTEK), and 705-807 (VHAS…SPGG). Residue Thr725 is modified to Phosphothreonine. Positions 726–737 (PTDRRHTGKGKE) are enriched in basic and acidic residues. The C-terminal (CTD) stretch occupies residues 777 to 929 (RTSEGLEQKS…TEITPEDGED (153 aa)). The span at 789-802 (ESSTVRVESTSVGS) shows a compositional bias: low complexity. Phosphoserine is present on residues Ser802 and Ser804. A Phosphothreonine modification is found at Thr923.

As to quaternary structure, interacts (via FERM domain) with CADM1. Interacts (via FERM domain) with PRMT3; the interaction is direct and inhibits the protein-arginine N-methyltransferase activity of PRMT3. Interacts with PRMT5. Interacts with PRMT6. In terms of assembly, has the complete spectrin--actin-binding (SAB) domain and fully interacts with spectrin and actin. In terms of tissue distribution, detected in brain (at protein level). Highest expression in brain, lower in testis, adrenal gland, heart and kidney. Also present in muscle and epithelial cells. Isoform 1 is expressed in brain, isoform 2 is expressed in heart and isoform 3 is mostly expressed in kidney but also in heart and brain. Isoform 6 seems to be most abundant in kidney while isoform 4 and isoform 5 are predominantly expressed in heart and brain.

It is found in the cytoplasm. The protein resides in the cytoskeleton. It localises to the cell membrane. Its subcellular location is the cell junction. Its function is as follows. Tumor suppressor that inhibits cell proliferation and promotes apoptosis. Modulates the activity of protein arginine N-methyltransferases, including PRMT3 and PRMT5. In Mus musculus (Mouse), this protein is Band 4.1-like protein 3.